A 410-amino-acid polypeptide reads, in one-letter code: S-adenosylmethionine synthase (410 aa).

His21 lines the ATP pocket. A Mg(2+)-binding site is contributed by Asp23. Residue Glu49 coordinates K(+). Residues Glu62 and Gln105 each contribute to the L-methionine site. Residues 105–115 are flexible loop; sequence QSQEIGAGVDQ. The tract at residues 107–133 is disordered; it reads QEIGAGVDQSHEVRSGENTDADDQAGA. ATP is bound by residues 180 to 182, Asp261, 267 to 268, Ala284, and Lys288; these read DGK and RK. Asp261 contacts L-methionine. Lys292 contributes to the L-methionine binding site.

Belongs to the AdoMet synthase family. As to quaternary structure, homotetramer; dimer of dimers. Mg(2+) is required as a cofactor. K(+) serves as cofactor.

The protein resides in the cytoplasm. It catalyses the reaction L-methionine + ATP + H2O = S-adenosyl-L-methionine + phosphate + diphosphate. It functions in the pathway amino-acid biosynthesis; S-adenosyl-L-methionine biosynthesis; S-adenosyl-L-methionine from L-methionine: step 1/1. Its function is as follows. Catalyzes the formation of S-adenosylmethionine (AdoMet) from methionine and ATP. The overall synthetic reaction is composed of two sequential steps, AdoMet formation and the subsequent tripolyphosphate hydrolysis which occurs prior to release of AdoMet from the enzyme. This Corynebacterium diphtheriae (strain ATCC 700971 / NCTC 13129 / Biotype gravis) protein is S-adenosylmethionine synthase.